The sequence spans 344 residues: uncharacterized protein (344 aa).

Over 1–98 (MIDFVKSRDT…NNDEIGIWNY (98 aa)) the chain is Cytoplasmic. The helical transmembrane segment at 99 to 119 (ISVAEMGGVLLFLSYWIWTCL) threads the bilayer. Position 120 (histidine 120) is a topological domain, lumenal. A helical membrane pass occupies residues 121–141 (FSKIIFPAQKVICLYIFLFAL). Residues 142 to 169 (NQTLQECIEEYVFSSECIKYRQFYSVYE) are Cytoplasmic-facing. Residues 170 to 192 (IIDFLRTNFYRLFVIYCALGFGI) form a helical membrane-spanning segment. At 193 to 198 (TRTVPK) the chain is on the lumenal side. Residues 199-219 (YLMIKGISIVIALCSVYWISL) form a helical membrane-spanning segment. The Cytoplasmic portion of the chain corresponds to 220–222 (YKD). A helical transmembrane segment spans residues 223-243 (VYVVSEIFDMIQYEVFPAIWV). Residues 244–273 (YSICHLLKQCTSVTTYENASKARFFRRMLN) are Lumenal-facing. A helical transmembrane segment spans residues 274-294 (AFIFIFCASPMLHYLSNIIFG). Topologically, residues 295–344 (NFDYRLSVIIGDLFTFMEKIAFPCYIMFPTHNEALAYNRNVAEEAQEKMI) are cytoplasmic.

It is found in the endoplasmic reticulum membrane. This is an uncharacterized protein from Schizosaccharomyces pombe (strain 972 / ATCC 24843) (Fission yeast).